The following is a 320-amino-acid chain: ATP-dependent 6-phosphofructokinase (320 aa).

An ATP-binding site is contributed by glycine 12. ADP is bound by residues 22–26 (RGVVR) and 55–60 (RYSVSD). ATP contacts are provided by residues 73-74 (RF) and 103-106 (GDGS). Aspartate 104 contacts Mg(2+). 126–128 (TID) is a binding site for substrate. The Proton acceptor role is filled by aspartate 128. Position 155 (arginine 155) interacts with ADP. Substrate is bound by residues arginine 163 and 170-172 (MGR). Residues 186-188 (GCE), lysine 212, and 214-216 (KKH) contribute to the ADP site. Substrate contacts are provided by residues glutamate 223, arginine 244, and 250–253 (HIQR).

This sequence belongs to the phosphofructokinase type A (PFKA) family. ATP-dependent PFK group I subfamily. Prokaryotic clade 'B1' sub-subfamily. As to quaternary structure, homotetramer. Requires Mg(2+) as cofactor.

The protein localises to the cytoplasm. It catalyses the reaction beta-D-fructose 6-phosphate + ATP = beta-D-fructose 1,6-bisphosphate + ADP + H(+). The protein operates within carbohydrate degradation; glycolysis; D-glyceraldehyde 3-phosphate and glycerone phosphate from D-glucose: step 3/4. Its activity is regulated as follows. Allosterically activated by ADP and other diphosphonucleosides, and allosterically inhibited by phosphoenolpyruvate. Catalyzes the phosphorylation of D-fructose 6-phosphate to fructose 1,6-bisphosphate by ATP, the first committing step of glycolysis. The protein is ATP-dependent 6-phosphofructokinase of Cronobacter sakazakii (strain ATCC BAA-894) (Enterobacter sakazakii).